We begin with the raw amino-acid sequence, 267 residues long: Dihydropteroate synthase (267 aa).

In terms of domain architecture, Pterin-binding spans 1 to 251 (MTKTKIMGIL…NVELNAKLAK (251 aa)). Residue Asn11 coordinates Mg(2+). Residues Thr51, Asp84, Asn103, Asp167, Lys203, and 239–241 (RVH) each bind (7,8-dihydropterin-6-yl)methyl diphosphate.

It belongs to the DHPS family. Homodimer. Requires Mg(2+) as cofactor.

It catalyses the reaction (7,8-dihydropterin-6-yl)methyl diphosphate + 4-aminobenzoate = 7,8-dihydropteroate + diphosphate. Its pathway is cofactor biosynthesis; tetrahydrofolate biosynthesis; 7,8-dihydrofolate from 2-amino-4-hydroxy-6-hydroxymethyl-7,8-dihydropteridine diphosphate and 4-aminobenzoate: step 1/2. Its function is as follows. Catalyzes the condensation of para-aminobenzoate (pABA) with 6-hydroxymethyl-7,8-dihydropterin diphosphate (DHPt-PP) to form 7,8-dihydropteroate (H2Pte), the immediate precursor of folate derivatives. This Staphylococcus aureus (strain MW2) protein is Dihydropteroate synthase (folP).